Consider the following 77-residue polypeptide: MSNIEERVKKIIIEQLGVKEEDVKSAASFVDDLGADSLDTVELVMALEEEFDTEIPDEEAEKITTVQAAIDYVSKNQ.

In terms of domain architecture, Carrier spans 2–77; the sequence is SNIEERVKKI…AAIDYVSKNQ (76 aa). O-(pantetheine 4'-phosphoryl)serine is present on serine 37.

Belongs to the acyl carrier protein (ACP) family. Post-translationally, 4'-phosphopantetheine is transferred from CoA to a specific serine of apo-ACP by AcpS. This modification is essential for activity because fatty acids are bound in thioester linkage to the sulfhydryl of the prosthetic group.

Its subcellular location is the cytoplasm. It functions in the pathway lipid metabolism; fatty acid biosynthesis. In terms of biological role, carrier of the growing fatty acid chain in fatty acid biosynthesis. This is Acyl carrier protein from Shewanella denitrificans (strain OS217 / ATCC BAA-1090 / DSM 15013).